We begin with the raw amino-acid sequence, 265 residues long: Tryptophan synthase alpha chain (265 aa).

Catalysis depends on proton acceptor residues Glu49 and Asp60.

This sequence belongs to the TrpA family. As to quaternary structure, tetramer of two alpha and two beta chains.

The enzyme catalyses (1S,2R)-1-C-(indol-3-yl)glycerol 3-phosphate + L-serine = D-glyceraldehyde 3-phosphate + L-tryptophan + H2O. It functions in the pathway amino-acid biosynthesis; L-tryptophan biosynthesis; L-tryptophan from chorismate: step 5/5. Its function is as follows. The alpha subunit is responsible for the aldol cleavage of indoleglycerol phosphate to indole and glyceraldehyde 3-phosphate. In Paracoccus denitrificans (strain Pd 1222), this protein is Tryptophan synthase alpha chain.